We begin with the raw amino-acid sequence, 367 residues long: AA9 family lytic polysaccharide monooxygenase A (367 aa).

The signal sequence occupies residues 1–20 (MKSSTFGMLALAAAAKLVSA). Histidine 21 serves as a coordination point for Cu(2+). The segment at 37-56 (GNSESGYIRSPPSNSPITDV) is disordered. Residues cysteine 63 and cysteine 183 are joined by a disulfide bond. Cu(2+) is bound at residue histidine 102. Residue histidine 169 participates in O2 binding. Tyrosine 180 contacts Cu(2+). The tract at residues 234 to 287 (GASGSSSSPSASASASAPAATSAAPAPSSFTTIAKQPATSSTEAPSTENTSTTS) is disordered. 2 stretches are compositionally biased toward low complexity: residues 235 to 262 (ASGS…APSS) and 270 to 287 (PATS…STTS). Asparagine 282 carries N-linked (GlcNAc...) asparagine glycosylation. Positions 329–365 (GAVKEWYQCGGLNYKGSTQCEEGLTCKKWNPYYYQCI) constitute a CBM1 domain.

It belongs to the polysaccharide monooxygenase AA9 family. Cu(2+) serves as cofactor.

It is found in the secreted. It catalyses the reaction [(1-&gt;4)-beta-D-glucosyl]n+m + reduced acceptor + O2 = 4-dehydro-beta-D-glucosyl-[(1-&gt;4)-beta-D-glucosyl]n-1 + [(1-&gt;4)-beta-D-glucosyl]m + acceptor + H2O.. Its function is as follows. Lytic polysaccharide monooxygenase (LPMO) that depolymerizes crystalline and amorphous polysaccharides via the oxidation of scissile alpha- or beta-(1-4)-glycosidic bonds, yielding C4 oxidation products. Catalysis by LPMOs requires the reduction of the active-site copper from Cu(II) to Cu(I) by a reducing agent and H(2)O(2) or O(2) as a cosubstrate. Active on cellulose and cello-oligosaccharides, as well as plant cell wall-derived hemicellulosic polysaccharides. Also active on cello-oligosaccharides such as cellohexaose, cellopentaose or cellotetraose. This is AA9 family lytic polysaccharide monooxygenase A from Aspergillus oryzae (strain ATCC 42149 / RIB 40) (Yellow koji mold).